Consider the following 51-residue polypeptide: RICTNCCAGYKGCNYYSANGAFICEGESDPKNPNVCPRNCDTNIAYSKCLR.

Cystine bridges form between Cys3-Cys40, Cys6-Cys24, Cys7-Cys36, and Cys13-Cys49.

It belongs to the protease inhibitor I20 (potato type II proteinase inhibitor) family.

The protein localises to the secreted. The protein is Proteinase inhibitor PTI of Solanum tuberosum (Potato).